The following is a 1295-amino-acid chain: Phosphoribosylformylglycinamidine synthase (1295 aa).

Residues 302–327 (APFSGAATGSGGEIRDEGATGRGSKP) form a disordered region. ATP is bound by residues 306–317 (GAATGSGGEIRD) and Ala677. Residues Asp678, Glu717, Asn721, and Asp884 each contribute to the Mg(2+) site. Ser886 provides a ligand contact to ATP. Residues 1042-1295 (MAILREQGVN…MFRNARVYLG (254 aa)) enclose the Glutamine amidotransferase type-1 domain. Cys1135 serves as the catalytic Nucleophile. Residues His1260 and Glu1262 contribute to the active site.

It in the N-terminal section; belongs to the FGAMS family. As to quaternary structure, monomer.

The protein resides in the cytoplasm. The enzyme catalyses N(2)-formyl-N(1)-(5-phospho-beta-D-ribosyl)glycinamide + L-glutamine + ATP + H2O = 2-formamido-N(1)-(5-O-phospho-beta-D-ribosyl)acetamidine + L-glutamate + ADP + phosphate + H(+). Its pathway is purine metabolism; IMP biosynthesis via de novo pathway; 5-amino-1-(5-phospho-D-ribosyl)imidazole from N(2)-formyl-N(1)-(5-phospho-D-ribosyl)glycinamide: step 1/2. Functionally, phosphoribosylformylglycinamidine synthase involved in the purines biosynthetic pathway. Catalyzes the ATP-dependent conversion of formylglycinamide ribonucleotide (FGAR) and glutamine to yield formylglycinamidine ribonucleotide (FGAM) and glutamate. The protein is Phosphoribosylformylglycinamidine synthase of Pseudoalteromonas atlantica (strain T6c / ATCC BAA-1087).